Consider the following 250-residue polypeptide: MENTIVVKLGGVASDNLTEDFFQQIIQWQAANKKIVLVHGGGHYITKMMKSLAIPVETKNGLRVTNKATLEVTKMVLIGQVQPAITTAFQKRNISVIGLNAGDTGLLEADFLNDANLGFVGKITKVKTDLIEQLLSENIITVIAPLGINSEYDWLNVNADTAACEVASALQAEALYLLTDVPGVKKGSEIIGEIATDEIEKLQNAGVIKGGMIPKLASAAFAAENGVGKVIITDSLNTSGTKIKNKVAIG.

Substrate contacts are provided by residues 41 to 42, arginine 63, and asparagine 156; that span reads GG.

It belongs to the acetylglutamate kinase family. ArgB subfamily.

The protein resides in the cytoplasm. The enzyme catalyses N-acetyl-L-glutamate + ATP = N-acetyl-L-glutamyl 5-phosphate + ADP. The protein operates within amino-acid biosynthesis; L-arginine biosynthesis; N(2)-acetyl-L-ornithine from L-glutamate: step 2/4. In terms of biological role, catalyzes the ATP-dependent phosphorylation of N-acetyl-L-glutamate. The sequence is that of Acetylglutamate kinase from Listeria monocytogenes serotype 4b (strain F2365).